Reading from the N-terminus, the 292-residue chain is Aspartate carbamoyltransferase catalytic subunit (292 aa).

2 residues coordinate carbamoyl phosphate: R49 and T50. K77 contributes to the L-aspartate binding site. Carbamoyl phosphate contacts are provided by R99, H127, and Q130. Residues R161 and R211 each coordinate L-aspartate. Residues G250 and P251 each coordinate carbamoyl phosphate.

The protein belongs to the aspartate/ornithine carbamoyltransferase superfamily. ATCase family. As to quaternary structure, heterododecamer (2C3:3R2) of six catalytic PyrB chains organized as two trimers (C3), and six regulatory PyrI chains organized as three dimers (R2).

It carries out the reaction carbamoyl phosphate + L-aspartate = N-carbamoyl-L-aspartate + phosphate + H(+). It functions in the pathway pyrimidine metabolism; UMP biosynthesis via de novo pathway; (S)-dihydroorotate from bicarbonate: step 2/3. In terms of biological role, catalyzes the condensation of carbamoyl phosphate and aspartate to form carbamoyl aspartate and inorganic phosphate, the committed step in the de novo pyrimidine nucleotide biosynthesis pathway. The protein is Aspartate carbamoyltransferase catalytic subunit of Campylobacter lari (strain RM2100 / D67 / ATCC BAA-1060).